Consider the following 432-residue polypeptide: 3-phosphoshikimate 1-carboxyvinyltransferase (432 aa).

Lys23, Ser24, and Arg28 together coordinate 3-phosphoshikimate. Phosphoenolpyruvate is bound at residue Lys23. 2 residues coordinate phosphoenolpyruvate: Gly95 and Arg123. Ser167, Gln169, Asp317, and Lys344 together coordinate 3-phosphoshikimate. Gln169 is a binding site for phosphoenolpyruvate. Asp317 serves as the catalytic Proton acceptor. Arg348 and Arg390 together coordinate phosphoenolpyruvate.

This sequence belongs to the EPSP synthase family. In terms of assembly, monomer.

It is found in the cytoplasm. It catalyses the reaction 3-phosphoshikimate + phosphoenolpyruvate = 5-O-(1-carboxyvinyl)-3-phosphoshikimate + phosphate. It functions in the pathway metabolic intermediate biosynthesis; chorismate biosynthesis; chorismate from D-erythrose 4-phosphate and phosphoenolpyruvate: step 6/7. Its function is as follows. Catalyzes the transfer of the enolpyruvyl moiety of phosphoenolpyruvate (PEP) to the 5-hydroxyl of shikimate-3-phosphate (S3P) to produce enolpyruvyl shikimate-3-phosphate and inorganic phosphate. The sequence is that of 3-phosphoshikimate 1-carboxyvinyltransferase from Staphylococcus aureus (strain bovine RF122 / ET3-1).